The sequence spans 642 residues: uncharacterized protein (642 aa).

Over 1–15 (MVHITLGQAIWVSVK) the chain is Cytoplasmic. Residues 16–36 (PIIKIYLIIGVGFLMAKMGIL) form a helical membrane-spanning segment. The Extracellular portion of the chain corresponds to 37–42 (TVEATR). The helical transmembrane segment at 43-63 (IISDIVLTVLLPSLSFNKIVA) threads the bilayer. Residues 64–73 (NIEDKDIKSV) lie on the Cytoplasmic side of the membrane. The helical transmembrane segment at 74–94 (GIICLSALLIFGSGFFFAYVV) threads the bilayer. The Extracellular portion of the chain corresponds to 95–104 (RLFLPVPKQW). A helical membrane pass occupies residues 105-125 (YGGILAGGMFPNISDLPIAYL). Residues 126–142 (QSMDQGLVFSEEEGNKG) lie on the Cytoplasmic side of the membrane. Residues 143–163 (VANVIIFLTMFLICIFNLGGF) traverse the membrane as a helical segment. Residues 164–460 (RLIESDFEYN…FLKNCLRPCS (297 aa)) lie on the Extracellular side of the membrane. Disordered stretches follow at residues 183-206 (ETTK…RFFS) and 227-324 (GTKG…SQPR). 2 stretches are compositionally biased toward polar residues: residues 240–260 (RRST…NSKI) and 272–312 (IACT…SSID). A helical transmembrane segment spans residues 461-481 (MAVIIALTVAFIPWVKALFVT). Residues 482 to 499 (TANTPHISQAPDNAPPLS) are Cytoplasmic-facing. The helical transmembrane segment at 500 to 520 (FFMDFTGYVGAACVPFGLILL) threads the bilayer. At 521–538 (GATLGRLKIGNLYPGFWK) the chain is on the extracellular side. A helical transmembrane segment spans residues 539-559 (AAVTLVILRQCVMPIFGVLWC). Residues 560–574 (DRLVKAGWVNWQDDR) are Cytoplasmic-facing. A helical transmembrane segment spans residues 575–595 (MLLFVIAISWNLPTMTTLIYF). Over 596–614 (TASFTPPETTAPIQMECVS) the chain is Extracellular. A helical membrane pass occupies residues 615–635 (FFLMLQYPLMVVSLPFLVSYF). The Cytoplasmic portion of the chain corresponds to 636–642 (LKVQMNL).

It belongs to the auxin efflux carrier (TC 2.A.69) family.

It localises to the membrane. This is an uncharacterized protein from Saccharomyces cerevisiae (strain ATCC 204508 / S288c) (Baker's yeast).